A 167-amino-acid chain; its full sequence is Ribosome maturation factor RimM (167 aa).

A PRC barrel domain is found at 92–165 (EDTYYIADII…RITIDPIEGM (74 aa)).

This sequence belongs to the RimM family. In terms of assembly, binds ribosomal protein uS19.

Its subcellular location is the cytoplasm. In terms of biological role, an accessory protein needed during the final step in the assembly of 30S ribosomal subunit, possibly for assembly of the head region. Essential for efficient processing of 16S rRNA. May be needed both before and after RbfA during the maturation of 16S rRNA. It has affinity for free ribosomal 30S subunits but not for 70S ribosomes. This chain is Ribosome maturation factor RimM, found in Alkaliphilus oremlandii (strain OhILAs) (Clostridium oremlandii (strain OhILAs)).